The sequence spans 472 residues: Probable serine/threonine-protein kinase At1g01540 (472 aa).

Residues 24-44 traverse the membrane as a helical segment; that stretch reads LWVVIGILLGSLIVIALFLLS. Residues T67 and T143 each carry the phosphothreonine modification. The 278-residue stretch at 154 to 431 folds into the Protein kinase domain; sequence LCEENVIGEG…IHMLEAEDLL (278 aa). Residues 160 to 168 and K182 each bind ATP; that span reads IGEGGYGIV. Position 227 is a phosphotyrosine (Y227). The active-site Proton acceptor is the D280. The residue at position 284 (S284) is a Phosphoserine. 2 positions are modified to phosphothreonine: T314 and T319. Y327 bears the Phosphotyrosine mark. Positions 437 to 449 are enriched in basic and acidic residues; the sequence is RTTRDHGSRERQE. A disordered region spans residues 437–472; sequence RTTRDHGSRERQETAVVAAGSESGESGSRHHQQKQR. Low complexity predominate over residues 451–462; it reads AVVAAGSESGES.

Belongs to the protein kinase superfamily. Ser/Thr protein kinase family.

The protein localises to the membrane. The catalysed reaction is L-seryl-[protein] + ATP = O-phospho-L-seryl-[protein] + ADP + H(+). The enzyme catalyses L-threonyl-[protein] + ATP = O-phospho-L-threonyl-[protein] + ADP + H(+). The protein is Probable serine/threonine-protein kinase At1g01540 of Arabidopsis thaliana (Mouse-ear cress).